Here is an 857-residue protein sequence, read N- to C-terminus: DNA mismatch repair protein MutS (857 aa).

Position 621–628 (621–628 (GPNMGGKS)) interacts with ATP.

This sequence belongs to the DNA mismatch repair MutS family.

Functionally, this protein is involved in the repair of mismatches in DNA. It is possible that it carries out the mismatch recognition step. This protein has a weak ATPase activity. In Francisella tularensis subsp. tularensis (strain SCHU S4 / Schu 4), this protein is DNA mismatch repair protein MutS.